The primary structure comprises 76 residues: UPF0270 protein PSPA7_1664 (76 aa).

Belongs to the UPF0270 family.

The sequence is that of UPF0270 protein PSPA7_1664 from Pseudomonas paraeruginosa (strain DSM 24068 / PA7) (Pseudomonas aeruginosa (strain PA7)).